The sequence spans 342 residues: Signal-regulatory protein beta-2 (342 aa).

Positions 1-32 (MCSTMSAPTCLAHLPPCFLLLALVLVPSDASG) are cleaved as a signal peptide. Ig-like V-type domains follow at residues 33 to 143 (QSSR…KSDE) and 157 to 258 (PDLW…SGQG). Residues 33–287 (QSSRNDWQVL…EPATEMSPTG (255 aa)) are Extracellular-facing. Cys60 and Cys127 are joined by a disulfide. 3 N-linked (GlcNAc...) asparagine glycosylation sites follow: Asn116, Asn179, and Asn231. Cys180 and Cys242 are oxidised to a cystine. Residues 288–308 (LLVVFAPVVLGLKAITLAALL) traverse the membrane as a helical segment. The Cytoplasmic segment spans residues 309 to 342 (LALATSRRSPGQEDVKTTGPAGAMNTLAWSKGQE). Positions 317 to 342 (SPGQEDVKTTGPAGAMNTLAWSKGQE) are disordered.

The protein localises to the membrane. In Homo sapiens (Human), this protein is Signal-regulatory protein beta-2 (SIRPB2).